Here is a 79-residue protein sequence, read N- to C-terminus: Small ribosomal subunit protein bS18 (79 aa).

It belongs to the bacterial ribosomal protein bS18 family. Part of the 30S ribosomal subunit. Forms a tight heterodimer with protein bS6.

Binds as a heterodimer with protein bS6 to the central domain of the 16S rRNA, where it helps stabilize the platform of the 30S subunit. This chain is Small ribosomal subunit protein bS18, found in Streptococcus pneumoniae serotype 19F (strain G54).